Reading from the N-terminus, the 149-residue chain is Arginine repressor (149 aa).

Belongs to the ArgR family.

Its subcellular location is the cytoplasm. Its pathway is amino-acid biosynthesis; L-arginine biosynthesis [regulation]. In terms of biological role, regulates arginine biosynthesis genes. In Bacillus pumilus (strain SAFR-032), this protein is Arginine repressor.